Consider the following 740-residue polypeptide: Alpha-1,6-mannosylglycoprotein 6-beta-N-acetylglucosaminyltransferase A (740 aa).

Topologically, residues 1-13 are cytoplasmic; sequence MAFFTPWKLSSQK. A helical; Signal-anchor for type II membrane protein membrane pass occupies residues 14 to 30; the sequence is LGFFLVTFGFIWGMMLL. At 31–740 the chain is on the lumenal side; that stretch reads HFTIQQRTQP…GQVALCKDCL (710 aa). N-linked (GlcNAc...) asparagine glycans are attached at residues Asn109, Asn114, and Asn117. Intrachain disulfides connect Cys144-Cys182, Cys155-Cys195, Cys171-Cys337, Cys371-Cys625, Cys648-Cys723, Cys652-Cys725, Cys659-Cys712, Cys680-Cys701, and Cys736-Cys739. A sufficient for catalytic activity region spans residues 212–740; it reads NSLAEIRTDF…GQVALCKDCL (529 aa). Asn333 carries an N-linked (GlcNAc...) asparagine glycan. 377–378 is a substrate binding site; sequence DS. 2 N-linked (GlcNAc...) asparagine glycosylation sites follow: Asn432 and Asn446. Glu525 lines the UDP-N-acetyl-alpha-D-glucosamine pocket. Lys553 is a substrate binding site.

The protein belongs to the glycosyltransferase 18 family. Post-translationally, N-glycosylated. A secreted form is released from the membrane after cleavage by gamma-secretase.

Its subcellular location is the golgi apparatus membrane. The protein localises to the secreted. The enzyme catalyses N(4)-{beta-D-GlcNAc-(1-&gt;2)-[beta-D-GlcNAc-(1-&gt;4)]-alpha-D-Man-(1-&gt;3)-[beta-D-GlcNAc-(1-&gt;2)-alpha-D-Man-(1-&gt;6)]-beta-D-Man-(1-&gt;4)-beta-D-GlcNAc-(1-&gt;4)-beta-D-GlcNAc}-L-asparaginyl-[protein] + UDP-N-acetyl-alpha-D-glucosamine = N(4)-{beta-D-GlcNAc-(1-&gt;2)-[beta-D-GlcNAc-(1-&gt;4)]-alpha-D-Man-(1-&gt;3)-[beta-D-GlcNAc-(1-&gt;2)-[beta-D-GlcNAc-(1-&gt;6)]-alpha-D-Man-(1-&gt;6)]-beta-D-Man-(1-&gt;4)-beta-D-GlcNAc-(1-&gt;4)-beta-D-GlcNAc}-L-asparaginyl-[protein] + UDP + H(+). The protein operates within protein modification; protein glycosylation. Its function is as follows. Catalyzes the addition of N-acetylglucosamine (GlcNAc) in beta 1-6 linkage to the alpha-linked mannose of biantennary N-linked oligosaccharides. Catalyzes an important step in the biosynthesis of branched, complex-type N-glycans, such as those found on EGFR, TGFR (TGF-beta receptor) and CDH2. Via its role in the biosynthesis of complex N-glycans, plays an important role in the activation of cellular signaling pathways, reorganization of the actin cytoskeleton, cell-cell adhesion and cell migration. MGAT5-dependent EGFR N-glycosylation enhances the interaction between EGFR and LGALS3 and thereby prevents rapid EGFR endocytosis and prolongs EGFR signaling. Required for efficient interaction between TGFB1 and its receptor. Enhances activation of intracellular signaling pathways by several types of growth factors, including FGF2, PDGF, IGF, TGFB1 and EGF. MGAT5-dependent CDH2 N-glycosylation inhibits CDH2-mediated homotypic cell-cell adhesion and contributes to the regulation of downstream signaling pathways. Promotes cell migration. Contributes to the regulation of the inflammatory response. MGAT5-dependent TCR N-glycosylation enhances the interaction between TCR and LGALS3, limits agonist-induced TCR clustering, and thereby dampens TCR-mediated responses to antigens. Required for normal leukocyte evasation and accumulation at sites of inflammation. Inhibits attachment of monocytes to the vascular endothelium and subsequent monocyte diapedesis. Promotes proliferation of umbilical vein endothelial cells and angiogenesis, at least in part by promoting the release of the growth factor FGF2 from the extracellular matrix. This chain is Alpha-1,6-mannosylglycoprotein 6-beta-N-acetylglucosaminyltransferase A (MGAT5), found in Cricetulus griseus (Chinese hamster).